The primary structure comprises 414 residues: MSYLETTDPEIAAIIDKETNRQINGLELIASENVVSRAVLEASGSIMTNKYAEGYPGKRYYGGCEFHDMAENLARDRVCSLFGAEHANVQPHSGSQANMAVYFTVLKPSDKILSMNLSQGGHLSHGSPVNFSGIIYESHQYGVDLKTERMDYGTIAEMARTIKPKIIVCGASAYPREIDFKAFAEISEEVGAYCVADIAHIAGLCATGIHPSPVGLTTFTTSTTHKTLRGPRGGFILCDKEFAAPIDKAVFPGMQGGPLMHIIAAKAVCFKEASTKEFKKYSEQVVKNARTMAETLSANGVRLVSGGTDNHLCLLDLTNFGITGLEAEQALGNAGITVNKNTIPNETKSPFVTSGLRVGTPAVTSRGMKESEMKQIGEWIAAIIRDSKNTRLQETIREEVKSLASQYPLYPDLT.

Residues leucine 117 and 121–123 (GHL) each bind (6S)-5,6,7,8-tetrahydrofolate. Lysine 226 is modified (N6-(pyridoxal phosphate)lysine). 349-351 (SPF) contributes to the (6S)-5,6,7,8-tetrahydrofolate binding site.

It belongs to the SHMT family. Homodimer. Pyridoxal 5'-phosphate is required as a cofactor.

It localises to the cytoplasm. It catalyses the reaction (6R)-5,10-methylene-5,6,7,8-tetrahydrofolate + glycine + H2O = (6S)-5,6,7,8-tetrahydrofolate + L-serine. It functions in the pathway one-carbon metabolism; tetrahydrofolate interconversion. Its pathway is amino-acid biosynthesis; glycine biosynthesis; glycine from L-serine: step 1/1. In terms of biological role, catalyzes the reversible interconversion of serine and glycine with tetrahydrofolate (THF) serving as the one-carbon carrier. Also exhibits THF-independent aldolase activity toward beta-hydroxyamino acids, producing glycine and aldehydes, via a retro-aldol mechanism. In Methanospirillum hungatei JF-1 (strain ATCC 27890 / DSM 864 / NBRC 100397 / JF-1), this protein is Serine hydroxymethyltransferase.